Reading from the N-terminus, the 273-residue chain is Spore development regulator vosA (273 aa).

Residues 66–75 (STTQELQSTQ) show a composition bias toward low complexity. The disordered stretch occupies residues 66 to 86 (STTQELQSTQPIAVRQQPRAA). The Velvet domain maps to 70–253 (ELQSTQPIAV…KEQGCIISIK (184 aa)). The Nuclear localization signal motif lies at 211–218 (FPTLTEIK). Residues 254–267 (KGNERARPRGADGR) show a composition bias toward basic and acidic residues. The interval 254-273 (KGNERARPRGADGRSDDEDD) is disordered.

Belongs to the velvet family. VosA subfamily. In terms of assembly, forms a heterodimeric complex with velB; the formation of the velB-vosA complex is light-dependent.

The protein resides in the nucleus. In terms of biological role, component of the velB-vosA heterodimeric complex that plays a dual role in activating genes associated with spore maturation and repressing certain development-associated genes. The complex binds DNA through the DNA-binding domain of vosA that recognizes an 11-nucleotide consensus sequence 5'-CTGGCCGCGGC-3' consisting of two motifs in the promoters of key developmental regulatory genes. Positively regulates the expression of wetA and represses abaA and brlA. Acts as a crucial regulator of both conidiation capacity and conidial quality. Responsible for the synthesis and accumulation of intracellular trehalose. The sequence is that of Spore development regulator vosA from Beauveria bassiana (strain ARSEF 2860) (White muscardine disease fungus).